The following is a 500-amino-acid chain: NAD(P)H-quinone oxidoreductase chain 4, chloroplastic (500 aa).

The next 14 membrane-spanning stretches (helical) occupy residues 4-24, 35-55, 87-107, 111-131, 134-154, 167-187, 211-231, 242-262, 274-294, 313-333, 334-354, 386-406, 417-437, and 462-482; these read FPWL…IFFL, YTIA…CYHF, LGSI…AWPV, SQLF…LFSS, LLLF…LLSM, FILY…GMGL, ILLY…IPLH, HYST…YGLI, YLFS…AALT, MGFI…GAIL, QILS…TACD, LALP…GLIT, LITF…LSML, and LFLL…PDFV.

The protein belongs to the complex I subunit 4 family.

The protein localises to the plastid. Its subcellular location is the chloroplast thylakoid membrane. The enzyme catalyses a plastoquinone + NADH + (n+1) H(+)(in) = a plastoquinol + NAD(+) + n H(+)(out). It catalyses the reaction a plastoquinone + NADPH + (n+1) H(+)(in) = a plastoquinol + NADP(+) + n H(+)(out). The sequence is that of NAD(P)H-quinone oxidoreductase chain 4, chloroplastic from Saccharum hybrid (Sugarcane).